The following is a 178-amino-acid chain: ATP synthase subunit delta (178 aa).

Belongs to the ATPase delta chain family. As to quaternary structure, F-type ATPases have 2 components, F(1) - the catalytic core - and F(0) - the membrane proton channel. F(1) has five subunits: alpha(3), beta(3), gamma(1), delta(1), epsilon(1). F(0) has three main subunits: a(1), b(2) and c(10-14). The alpha and beta chains form an alternating ring which encloses part of the gamma chain. F(1) is attached to F(0) by a central stalk formed by the gamma and epsilon chains, while a peripheral stalk is formed by the delta and b chains.

The protein localises to the cell inner membrane. Its function is as follows. F(1)F(0) ATP synthase produces ATP from ADP in the presence of a proton or sodium gradient. F-type ATPases consist of two structural domains, F(1) containing the extramembraneous catalytic core and F(0) containing the membrane proton channel, linked together by a central stalk and a peripheral stalk. During catalysis, ATP synthesis in the catalytic domain of F(1) is coupled via a rotary mechanism of the central stalk subunits to proton translocation. This protein is part of the stalk that links CF(0) to CF(1). It either transmits conformational changes from CF(0) to CF(1) or is implicated in proton conduction. This Cellvibrio japonicus (strain Ueda107) (Pseudomonas fluorescens subsp. cellulosa) protein is ATP synthase subunit delta.